Reading from the N-terminus, the 336-residue chain is Polyprenyl transferase dpasC (336 aa).

The chain crosses the membrane as a helical span at residues 34 to 54; the sequence is LFTIFAGGMFLFVASFPTTAF. Asn-66 carries N-linked (GlcNAc...) asparagine glycosylation. 7 helical membrane passes run 80–100, 125–145, 181–201, 205–225, 253–273, 274–294, and 311–331; these read ALCLSACYSFCGAGMVWNDWI, QAMLWMVFQMAVSWWLLHFML, YILGFTIAWPAVPGRTAIFHG, FAESVQACMPLLNMVFFWTIF, HVHLLLCLLLVPVAVCVPMYL, NQFHSTWLWVSWAGVWALSLL, and LHVDNFLLGAWTVVACTIELL.

This sequence belongs to the UbiA prenyltransferase family. Requires Mg(2+) as cofactor.

It localises to the membrane. It participates in secondary metabolite biosynthesis; terpenoid biosynthesis. Polyprenyl transferase; part of the gene cluster that mediates the biosynthesis of the diterpenoid pyrones subglutinols A and B. The first step of the pathway is the synthesis of the alpha-pyrone moiety by the polyketide synthase dpasA via condensation of one acetyl-CoA starter unit with 3 malonyl-CoA units and 2 methylations. The alpha-pyrone is then combined with geranylgeranyl pyrophosphate (GGPP) formed by the GGPP synthase dpasD through the action of the prenyltransferase dpasC to yield a linear alpha-pyrone diterpenoid. Subsequent steps in the diterpenoid pyrone biosynthetic pathway involve the decalin core formation, which is initiated by the epoxidation of the C10-C11 olefin by the FAD-dependent oxidoreductase dpasE, and is followed by a cyclization cascade catalyzed by the terpene cyclase dpasB. The FAD-linked oxidoreductase dpasF is then involved in tetrahydrofuran (THF) ring formation at the C5 unit to complete the formation of subglutinols A and B. DpasF possesses also an additional catalytic ability of multi-step oxidations to generate a new DDP analog with an enone system at the C5 named FDDP A. The protein is Polyprenyl transferase dpasC of Apiospora sacchari (Arthrinium sacchari).